Consider the following 196-residue polypeptide: Chaperone protein TorD (196 aa).

Belongs to the TorD/DmsD family. TorD subfamily.

The protein localises to the cytoplasm. Its function is as follows. Involved in the biogenesis of TorA. Acts on TorA before the insertion of the molybdenum cofactor and, as a result, probably favors a conformation of the apoenzyme that is competent for acquiring the cofactor. The chain is Chaperone protein TorD from Pasteurella multocida (strain Pm70).